Here is a 610-residue protein sequence, read N- to C-terminus: UvrABC system protein C (610 aa).

Residues serine 16 to valine 94 enclose the GIY-YIG domain. A UVR domain is found at aspartate 204–valine 239. The interval histidine 540–glutamate 559 is disordered. Basic residues predominate over residues serine 543–valine 552.

It belongs to the UvrC family. As to quaternary structure, interacts with UvrB in an incision complex.

It is found in the cytoplasm. Its function is as follows. The UvrABC repair system catalyzes the recognition and processing of DNA lesions. UvrC both incises the 5' and 3' sides of the lesion. The N-terminal half is responsible for the 3' incision and the C-terminal half is responsible for the 5' incision. This chain is UvrABC system protein C, found in Klebsiella pneumoniae (strain 342).